Here is a 330-residue protein sequence, read N- to C-terminus: Aspartate--ammonia ligase (330 aa).

It belongs to the class-II aminoacyl-tRNA synthetase family. AsnA subfamily.

The protein localises to the cytoplasm. The catalysed reaction is L-aspartate + NH4(+) + ATP = L-asparagine + AMP + diphosphate + H(+). It participates in amino-acid biosynthesis; L-asparagine biosynthesis; L-asparagine from L-aspartate (ammonia route): step 1/1. This Haemophilus influenzae (strain 86-028NP) protein is Aspartate--ammonia ligase.